A 505-amino-acid chain; its full sequence is Zinc metalloproteinase/disintegrin (505 aa).

An N-terminal signal peptide occupies residues 1 to 20; sequence MIQVLLVIICLAAFPYQGTS. The propeptide occupies 21-214; the sequence is IILESGNVND…PIKKASQSNL (194 aa). A run of 2 repeats spans residues 153–179 and 180–206. A Peptidase M12B domain is found at 220–416; the sequence is RYIELVIVAD…QKPQCILNKP (197 aa). Ca(2+) contacts are provided by Glu223 and Asp307. Residue His356 coordinates Zn(2+). Residue Glu357 is part of the active site. His360 and His366 together coordinate Zn(2+). 2 cysteine pairs are disulfide-bonded: Cys371–Cys395 and Cys373–Cys378. Ca(2+) is bound by residues Cys411 and Asn414. Residues 417–432 constitute a propeptide that is removed on maturation; sequence LRTDTVSTPVSGNELL. A Disintegrin domain is found at 424–505; it reads TPVSGNELLE…AGCPRNPFHA (82 aa). 6 cysteine pairs are disulfide-bonded: Cys438–Cys453, Cys440–Cys448, Cys447–Cys470, Cys461–Cys467, Cys466–Cys491, and Cys479–Cys498. Positions 483–485 match the Cell attachment site motif; the sequence is RGD.

It belongs to the venom metalloproteinase (M12B) family. P-II subfamily. P-IIa sub-subfamily. As to quaternary structure, monomer. It depends on Zn(2+) as a cofactor. As to expression, expressed by the venom gland.

The protein localises to the secreted. In terms of biological role, impairs hemostasis in the envenomed animal. Its function is as follows. Inhibits platelet aggregation induced by ADP, thrombin, platelet-activating factor and collagen. Acts by inhibiting fibrinogen interaction with platelet receptors GPIIb/GPIIIa (ITGA2B/ITGB3). The protein is Zinc metalloproteinase/disintegrin of Gloydius brevicauda (Korean slamosa snake).